The primary structure comprises 256 residues: Anamorsin homolog (256 aa).

The N-terminal SAM-like domain stretch occupies residues 1–136 (MNSLSLELNK…DTNESSTINI (136 aa)). The segment at 126–148 (WDTNESSTINIPSTSSNNPWASI) is disordered. Positions 131–144 (SSTINIPSTSSNNP) are enriched in low complexity. The interval 137 to 166 (PSTSSNNPWASIEGGDRINENDLVSENDKT) is linker. Positions 176, 185, 188, and 190 each coordinate [2Fe-2S] cluster. The fe-S binding site A stretch occupies residues 176–190 (CEVGKTKKACKNCTC). The [4Fe-4S] cluster site is built by Cys-217, Cys-220, Cys-228, and Cys-231. 2 consecutive short sequence motifs (cx2C motif) follow at residues 217–220 (CGNC) and 228–231 (CGGC). Residues 217–231 (CGNCSLGDAFRCGGC) are fe-S binding site B.

Belongs to the anamorsin family. As to quaternary structure, monomer. The cofactor is [2Fe-2S] cluster. It depends on [4Fe-4S] cluster as a cofactor.

The protein resides in the cytoplasm. It is found in the mitochondrion intermembrane space. Its function is as follows. Component of the cytosolic iron-sulfur (Fe-S) protein assembly (CIA) machinery. Required for the maturation of extramitochondrial Fe-S proteins. Part of an electron transfer chain functioning in an early step of cytosolic Fe-S biogenesis, facilitating the de novo assembly of a [4Fe-4S] cluster on the cytosolic Fe-S scaffold complex. Electrons are transferred from NADPH via a FAD- and FMN-containing diflavin oxidoreductase. Together with the diflavin oxidoreductase, also required for the assembly of the diferric tyrosyl radical cofactor of ribonucleotide reductase (RNR), probably by providing electrons for reduction during radical cofactor maturation in the catalytic small subunit. This chain is Anamorsin homolog (rsc43), found in Dictyostelium discoideum (Social amoeba).